The chain runs to 332 residues: Tetraacyldisaccharide 4'-kinase (332 aa).

55 to 62 (GVGGSGKT) is a binding site for ATP.

The protein belongs to the LpxK family.

It carries out the reaction a lipid A disaccharide + ATP = a lipid IVA + ADP + H(+). The protein operates within glycolipid biosynthesis; lipid IV(A) biosynthesis; lipid IV(A) from (3R)-3-hydroxytetradecanoyl-[acyl-carrier-protein] and UDP-N-acetyl-alpha-D-glucosamine: step 6/6. Transfers the gamma-phosphate of ATP to the 4'-position of a tetraacyldisaccharide 1-phosphate intermediate (termed DS-1-P) to form tetraacyldisaccharide 1,4'-bis-phosphate (lipid IVA). This is Tetraacyldisaccharide 4'-kinase from Acidithiobacillus ferrooxidans (strain ATCC 53993 / BNL-5-31) (Leptospirillum ferrooxidans (ATCC 53993)).